A 399-amino-acid polypeptide reads, in one-letter code: Probable WRKY transcription factor 48 (399 aa).

Basic and acidic residues-rich tracts occupy residues 1–11 (MEKKKEEDHHH) and 19–38 (KEIK…EQKQ). 2 disordered regions span residues 1–57 (MEKK…TSSD) and 138–202 (AESS…KNQK). The span at 143–161 (VVNTTPTSPNSTSVSSSSN) shows a compositional bias: low complexity. Polar residues predominate over residues 162 to 171 (EAANDNNSGK). Residues 184-193 (QQEQKGTKPQ) are compositionally biased toward low complexity. Positions 215-280 (SDIDNLDDGY…YEGQHTHPFP (66 aa)) form a DNA-binding region, WRKY. The disordered stretch occupies residues 361 to 399 (QASTSTSSSIRDHGLLQDILPSQIRSDTINTQTNEENKK). Positions 383–399 (QIRSDTINTQTNEENKK) are enriched in polar residues.

The protein localises to the nucleus. In terms of biological role, transcription factor. Interacts specifically with the W box (5'-(T)TGAC[CT]-3'), a frequently occurring elicitor-responsive cis-acting element. The protein is Probable WRKY transcription factor 48 (WRKY48) of Arabidopsis thaliana (Mouse-ear cress).